The primary structure comprises 180 residues: Ribosome rescue factor SmrB (180 aa).

The 76-residue stretch at 98–173 folds into the Smr domain; the sequence is LDLHGLTQLQ…GNAALLVLVA (76 aa).

The protein belongs to the SmrB family. In terms of assembly, associates with collided ribosomes, but not with correctly translating polysomes.

Its function is as follows. Acts as a ribosome collision sensor. Detects stalled/collided disomes (pairs of ribosomes where the leading ribosome is stalled and a second ribosome has collided with it) and endonucleolytically cleaves mRNA at the 5' boundary of the stalled ribosome. Stalled/collided disomes form a new interface (primarily via the 30S subunits) that binds SmrB. Cleaved mRNA becomes available for tmRNA ligation, leading to ribosomal subunit dissociation and rescue of stalled ribosomes. In Pectobacterium carotovorum subsp. carotovorum (strain PC1), this protein is Ribosome rescue factor SmrB.